Here is a 238-residue protein sequence, read N- to C-terminus: Ribonuclease PH (238 aa).

Residues arginine 87 and 125–127 (GTR) each bind phosphate.

It belongs to the RNase PH family. In terms of assembly, homohexameric ring arranged as a trimer of dimers.

It catalyses the reaction tRNA(n+1) + phosphate = tRNA(n) + a ribonucleoside 5'-diphosphate. Phosphorolytic 3'-5' exoribonuclease that plays an important role in tRNA 3'-end maturation. Removes nucleotide residues following the 3'-CCA terminus of tRNAs; can also add nucleotides to the ends of RNA molecules by using nucleoside diphosphates as substrates, but this may not be physiologically important. Probably plays a role in initiation of 16S rRNA degradation (leading to ribosome degradation) during starvation. The protein is Ribonuclease PH of Synechococcus elongatus (strain ATCC 33912 / PCC 7942 / FACHB-805) (Anacystis nidulans R2).